Reading from the N-terminus, the 347-residue chain is Toluene-4-sulfonate monooxygenase system iron-sulfur subunit TsaM1 (347 aa).

A Rieske domain is found at 7–109; it reads WYVAAWDTEI…VVERNRLVWI (103 aa). Positions 48, 50, 67, and 70 each coordinate [2Fe-2S] cluster.

As to quaternary structure, homotetramer. Part of the p-toluenesulfonate methyl-monooxygenase complex TsaBM, comprising the reductase TsaB and the oxygenase TsaM. Requires [2Fe-2S] cluster as cofactor.

The enzyme catalyses toluene-4-sulfonate + NADH + O2 + H(+) = 4-(hydroxymethyl)benzenesulfonate + NAD(+) + H2O. Involved in the toluene-4-sulfonate degradation pathway. Does not discriminate between the sulfonate and the carboxyl substituents and can also be involved in the p-toluenecarboxylate degradation pathway. Can use toluene-4-sulfonate, p-toluate, m-toluate and 4-ethylbenzoate as substrates, but not p-xylene, toluene and p-cresol. Also catalyzes the demethylation of 4-methoxybenzoate to 4-hydroxybenzoate. This is Toluene-4-sulfonate monooxygenase system iron-sulfur subunit TsaM1 (tsaM1) from Comamonas testosteroni (Pseudomonas testosteroni).